The sequence spans 196 residues: MKPLVVFVLGGPGAGKGTQCARIVEKYGYTHLSAGELLRDERKNPDSQYGELIEKYIKEGKIVPVEITISLLKREMDQTMAANAQKNKFLIDGFPRNQDNLQGWNKTMDGKADVSFVLFFDCNNEICIERCLERGKSSGRSDDNRESLEKRIQTYLQSTKPIIDLYEEMGKVKKIDASKSVDEVFDEVVQIFDKEG.

ATP is bound at residue 13–18 (GAGKGT). Ser33 carries the post-translational modification Phosphoserine. The segment at 33 to 63 (SAGELLRDERKNPDSQYGELIEKYIKEGKIV) is NMP. Arg39 is an a ribonucleoside 5'-phosphate binding site. Residues Lys43 and Lys55 each carry the N6-acetyllysine modification. A ribonucleoside 5'-phosphate is bound at residue 61-63 (KIV). A Glycyl lysine isopeptide (Lys-Gly) (interchain with G-Cter in SUMO2) cross-link involves residue Lys73. 93 to 96 (GFPR) is a binding site for a ribonucleoside 5'-phosphate. Position 100 (Asn100) interacts with CMP. An N6-succinyllysine modification is found at Lys106. Residues 133–143 (ERGKSSGRSDD) are LID. An ATP-binding site is contributed by Arg134. 2 residues coordinate a ribonucleoside 5'-phosphate: Arg140 and Arg151. Lys179 lines the ATP pocket. A Phosphoserine modification is found at Ser180.

It belongs to the adenylate kinase family. UMP-CMP kinase subfamily. In terms of assembly, monomer. Mg(2+) is required as a cofactor. In terms of tissue distribution, ubiquitously expressed.

The protein resides in the nucleus. The protein localises to the cytoplasm. It catalyses the reaction CMP + ATP = CDP + ADP. The enzyme catalyses dCMP + ATP = dCDP + ADP. It carries out the reaction UMP + ATP = UDP + ADP. The catalysed reaction is a 2'-deoxyribonucleoside 5'-diphosphate + ATP = a 2'-deoxyribonucleoside 5'-triphosphate + ADP. It catalyses the reaction a ribonucleoside 5'-diphosphate + ATP = a ribonucleoside 5'-triphosphate + ADP. Its function is as follows. Catalyzes the phosphorylation of pyrimidine nucleoside monophosphates at the expense of ATP. Plays an important role in de novo pyrimidine nucleotide biosynthesis. Has preference for UMP and CMP as phosphate acceptors. Also displays broad nucleoside diphosphate kinase activity. This chain is UMP-CMP kinase, found in Homo sapiens (Human).